Reading from the N-terminus, the 313-residue chain is Homoserine O-acetyltransferase (313 aa).

The Acyl-thioester intermediate role is filled by C144. Substrate is bound by residues K165 and S194. Catalysis depends on H236, which acts as the Proton acceptor. E238 is an active-site residue. R250 contacts substrate.

Belongs to the MetA family.

Its subcellular location is the cytoplasm. The catalysed reaction is L-homoserine + acetyl-CoA = O-acetyl-L-homoserine + CoA. The protein operates within amino-acid biosynthesis; L-methionine biosynthesis via de novo pathway; O-acetyl-L-homoserine from L-homoserine: step 1/1. Functionally, transfers an acetyl group from acetyl-CoA to L-homoserine, forming acetyl-L-homoserine. The sequence is that of Homoserine O-acetyltransferase from Jannaschia sp. (strain CCS1).